A 90-amino-acid chain; its full sequence is DNA-binding protein HU (90 aa).

Belongs to the bacterial histone-like protein family. In terms of assembly, homodimer.

Its function is as follows. Histone-like DNA-binding protein which is capable of wrapping DNA to stabilize it, and thus to prevent its denaturation under extreme environmental conditions. The sequence is that of DNA-binding protein HU (hup) from Staphylococcus aureus (strain COL).